A 182-amino-acid chain; its full sequence is Cytidylate kinase (182 aa).

Residue 7-15 (GPPGSGKSS) participates in ATP binding.

The protein belongs to the cytidylate kinase family. Type 2 subfamily.

It is found in the cytoplasm. The catalysed reaction is CMP + ATP = CDP + ADP. The enzyme catalyses dCMP + ATP = dCDP + ADP. This Sulfolobus acidocaldarius (strain ATCC 33909 / DSM 639 / JCM 8929 / NBRC 15157 / NCIMB 11770) protein is Cytidylate kinase (cmk).